Reading from the N-terminus, the 75-residue chain is MPAVFLLLRSLVVRLFGSRLAASGVQLLRRILTTATGHLGTVLRNIWERISSQQSKEAILGCVLCLLNMHKKVDN.

Residues 1–5 are Cytoplasmic-facing; the sequence is MPAVF. A helical membrane pass occupies residues 6-28; it reads LLLRSLVVRLFGSRLAASGVQLL. The Extracellular segment spans residues 29-75; the sequence is RRILTTATGHLGTVLRNIWERISSQQSKEAILGCVLCLLNMHKKVDN. Positions 58-67 match the AxLyCxL motif; it reads AILGCVLCLL.

This sequence belongs to the MYMX family. As to expression, specifically expressed in the developing myotome.

It localises to the cell membrane. Functionally, myoblast-specific protein that mediates myoblast fusion, an essential step for the formation of multi-nucleated muscle fibers. Involved in membrane fusion downstream of the lipid mixing step mediated by mymk. Acts by generating membrane stresses via its extracellular C-terminus, leading to drive fusion pore formation. The polypeptide is Protein myomixer (Danio rerio (Zebrafish)).